The following is a 179-amino-acid chain: Large ribosomal subunit protein uL5 (179 aa).

Belongs to the universal ribosomal protein uL5 family. In terms of assembly, part of the 50S ribosomal subunit; part of the 5S rRNA/L5/L18/L25 subcomplex. Contacts the 5S rRNA and the P site tRNA. Forms a bridge to the 30S subunit in the 70S ribosome.

Functionally, this is one of the proteins that bind and probably mediate the attachment of the 5S RNA into the large ribosomal subunit, where it forms part of the central protuberance. In the 70S ribosome it contacts protein S13 of the 30S subunit (bridge B1b), connecting the 2 subunits; this bridge is implicated in subunit movement. Contacts the P site tRNA; the 5S rRNA and some of its associated proteins might help stabilize positioning of ribosome-bound tRNAs. This Marinomonas sp. (strain MWYL1) protein is Large ribosomal subunit protein uL5.